The chain runs to 705 residues: Dolichyl-diphosphooligosaccharide--protein glycosyltransferase subunit STT3A (705 aa).

Topologically, residues 1 to 17 are cytoplasmic; that stretch reads MTKLGFLRLSYEKQDTL. The helical transmembrane segment at 18–38 threads the bilayer; that stretch reads LKLLILSMAAVLSFSTRLFAV. Residues 39–119 lie on the Lumenal side of the membrane; the sequence is LRFESVIHEF…IDIRNVCVFL (81 aa). Residues 47–49 carry the DXD motif 1 motif; it reads EFD. A Mn(2+)-binding site is contributed by aspartate 49. The chain crosses the membrane as a helical span at residues 120–138; sequence APLFSSFTTIVTYHLTKEL. Over 139 to 140 the chain is Cytoplasmic; that stretch reads KD. A helical transmembrane segment spans residues 141–158; sequence AGAGLLAAAMIAVVPGYI. Residues 159–169 lie on the Lumenal side of the membrane; sequence SRSVAGSYDNE. 2 residues coordinate Mn(2+): aspartate 167 and glutamate 169. A DXD motif 2 motif is present at residues 167 to 169; the sequence is DNE. A helical membrane pass occupies residues 170-189; it reads GIAIFCMLLTYYMWIKAVKT. Residues 190–191 are Cytoplasmic-facing; it reads GS. A helical membrane pass occupies residues 192-206; that stretch reads IYWAAKCALAYFYMV. At 207–211 the chain is on the lumenal side; that stretch reads SSWGG. The chain crosses the membrane as a helical span at residues 212 to 228; it reads YVFLINLIPLHVLVLML. The Cytoplasmic segment spans residues 229–233; sequence TGRFS. A helical membrane pass occupies residues 234 to 259; sequence HRIYVAYCTVYCLGTILSMQISFVGF. The Lumenal portion of the chain corresponds to 260-267; it reads QPVLSSEH. The helical transmembrane segment at 268 to 287 threads the bilayer; sequence MAAFGVFGLCQIHAFVDYLR. At 288 to 300 the chain is on the cytoplasmic side; it reads SKLNPQQFEVLFR. A helical membrane pass occupies residues 301-321; it reads SVISLVGFVLLTVGALLMLTG. Topologically, residues 322–356 are lumenal; sequence KISPWTGRFYSLLDPSYAKNNIPIIASVSEHQPTT. The short motif at 348-351 is the SVSE motif element; that stretch reads SVSE. The helical transmembrane segment at 357-379 threads the bilayer; the sequence is WSSYYFDLQLLVFMFPVGLYYCF. Residues 380–385 are Cytoplasmic-facing; it reads SNLSDA. Residues 386 to 402 form a helical membrane-spanning segment; it reads RIFIIMYGVTSMYFSAV. At 403 to 406 the chain is on the lumenal side; that stretch reads MVRL. Position 405 (arginine 405) interacts with dolichyl diphosphooligosaccharide. The helical transmembrane segment at 407–428 threads the bilayer; that stretch reads MLVLAPVMCILSGIGVSQVLST. The Cytoplasmic portion of the chain corresponds to 429 to 453; the sequence is YMKNLDISRPDKKSKKQQDSTYPIK. A helical transmembrane segment spans residues 454-473; that stretch reads NEVASGMILVMAFFLITYTF. Topologically, residues 474–705 are lumenal; it reads HSTWVTSEAY…DLDNRGLSRT (232 aa). The segment at 525–527 is interacts with target acceptor peptide in protein substrate; the sequence is WWD. A WWDYG motif motif is present at residues 525 to 529; sequence WWDYG. Tyrosine 530 contributes to the dolichyl diphosphooligosaccharide binding site. N-linked (GlcNAc...) asparagine glycans are attached at residues asparagine 537 and asparagine 544. An N-linked (GlcNAc...) (high mannose) asparagine glycan is attached at asparagine 548. A DK motif motif is present at residues 592-599; sequence DINKFLWM.

This sequence belongs to the STT3 family. In terms of assembly, component of the oligosaccharyltransferase (OST) complex. There are 2 OST complexes, OST-A and OST-B, which contain STT3A or STT3B as catalytic subunit, respectively. OST-A and OST-B contain common core subunits RPN1, RPN2, OST48, OST4, DAD1 and TMEM258, and OST-A contains DC2/OSTC and KRTCAP2/KCP2 specific accessory subunits. OST-A complex assembly occurs through the formation of 3 subcomplexes. Subcomplex 1 contains RPN1 and TMEM258, subcomplex 2 contains the OST-A-specific subunits STT3A, DC2/OSTC, and KCP2 as well as the core subunit OST4, and subcomplex 3 contains RPN2, DAD1, and OST48. The OST-A complex can form stable complexes with the Sec61 complex or with both the Sec61 and TRAP complexes. It depends on Mg(2+) as a cofactor. Requires Mn(2+) as cofactor.

The protein localises to the endoplasmic reticulum. Its subcellular location is the endoplasmic reticulum membrane. It catalyses the reaction a di-trans,poly-cis-dolichyl diphosphooligosaccharide + L-asparaginyl-[protein] = N(4)-(oligosaccharide-(1-&gt;4)-N-acetyl-beta-D-glucosaminyl-(1-&gt;4)-N-acetyl-beta-D-glucosaminyl)-L-asparaginyl-[protein] + a di-trans,poly-cis-dolichyl diphosphate + H(+). It participates in protein modification; protein glycosylation. Functionally, catalytic subunit of the oligosaccharyl transferase (OST) complex that catalyzes the initial transfer of a defined glycan (Glc(3)Man(9)GlcNAc(2) in eukaryotes) from the lipid carrier dolichol-pyrophosphate to an asparagine residue within an Asn-X-Ser/Thr consensus motif in nascent polypeptide chains, the first step in protein N-glycosylation. N-glycosylation occurs cotranslationally and the complex associates with the Sec61 complex at the channel-forming translocon complex that mediates protein translocation across the endoplasmic reticulum (ER). All subunits are required for a maximal enzyme activity. This subunit contains the active site and the acceptor peptide and donor lipid-linked oligosaccharide (LLO) binding pockets. STT3A is present in the majority of OST complexes and mediates cotranslational N-glycosylation of most sites on target proteins, while STT3B-containing complexes are required for efficient post-translational glycosylation and mediate glycosylation of sites that have been skipped by STT3A. STT3A-containing OST-A complex is also required to prevent hyperglycosylation of some target proteins by preventing glycosylation of facultative sites before folding of target proteins is completed. The sequence is that of Dolichyl-diphosphooligosaccharide--protein glycosyltransferase subunit STT3A from Mus musculus (Mouse).